A 251-amino-acid polypeptide reads, in one-letter code: Cobalt transport protein CbiM (251 aa).

A signal peptide spans 1–27; it reads MNKKKNTILIGLYFLVGIMLFPDRIYA. A run of 6 helical transmembrane segments spans residues 35 to 55, 66 to 86, 103 to 123, 131 to 151, 166 to 186, and 208 to 228; these read LPVK…ALGI, GPGI…LSSL, LGAI…VLIF, GGLT…PFVA, WLSV…TTAT, and VFAT…VLIF.

Belongs to the CbiM family. As to quaternary structure, forms an energy-coupling factor (ECF) transporter complex composed of an ATP-binding protein (A component, CbiO), a transmembrane protein (T component, CbiQ) and 2 possible substrate-capture proteins (S components, CbiM and CbiN) of unknown stoichimetry.

The protein resides in the cell membrane. Its pathway is cofactor biosynthesis; adenosylcobalamin biosynthesis. Part of the energy-coupling factor (ECF) transporter complex CbiMNOQ involved in cobalt import. The protein is Cobalt transport protein CbiM of Acetohalobium arabaticum (strain ATCC 49924 / DSM 5501 / Z-7288).